We begin with the raw amino-acid sequence, 71 residues long: Large ribosomal subunit protein bL31 (71 aa).

The Zn(2+) site is built by Cys16, Cys18, Cys37, and Cys40.

Belongs to the bacterial ribosomal protein bL31 family. Type A subfamily. In terms of assembly, part of the 50S ribosomal subunit. It depends on Zn(2+) as a cofactor.

In terms of biological role, binds the 23S rRNA. The polypeptide is Large ribosomal subunit protein bL31 (Pectobacterium atrosepticum (strain SCRI 1043 / ATCC BAA-672) (Erwinia carotovora subsp. atroseptica)).